A 259-amino-acid polypeptide reads, in one-letter code: Small ribosomal subunit protein eS1 (259 aa).

Disordered regions lie at residues 1–23 and 235–259; these read MAVG…KTAD and ESKS…VDSV. A compositionally biased stretch (basic residues) spans 8–19; that stretch reads KVTKGGKKGGKK. Basic and acidic residues predominate over residues 246 to 259; that stretch reads SRPDHYEPPKVDSV.

Belongs to the eukaryotic ribosomal protein eS1 family. Component of the small ribosomal subunit. Mature ribosomes consist of a small (40S) and a large (60S) subunit. The 40S subunit contains about 33 different proteins and 1 molecule of RNA (18S). The 60S subunit contains about 49 different proteins and 3 molecules of RNA (28S, 5.8S and 5S).

The protein localises to the cytoplasm. The protein is Small ribosomal subunit protein eS1 of Schistosoma japonicum (Blood fluke).